Consider the following 198-residue polypeptide: Large ribosomal subunit protein uL13 (198 aa).

It belongs to the universal ribosomal protein uL13 family.

The chain is Large ribosomal subunit protein uL13 (RPL13A) from Tetrahymena thermophila (strain SB210).